We begin with the raw amino-acid sequence, 452 residues long: Down-regulator of invasive growth 1 (452 aa).

2 disordered regions span residues 1 to 145 (MAVS…SAPA) and 262 to 311 (RNKR…ADLR). 2 stretches are compositionally biased toward polar residues: residues 12–22 (EDTSIAKSTQD) and 35–53 (KGSSDSNIKNSPGGNSVGQ). S45 is subject to Phosphoserine. The span at 61-77 (PEEDDSGDKEADHEDSE) shows a compositional bias: acidic residues. The segment covering 81–100 (AKKRKAQPLKNPKKSLKRGR) has biased composition (basic residues). Polar residues-rich tracts occupy residues 107–116 (LSDSNTNTHG), 124–145 (LASSNSAHFPPVANQNVKSAPA), 269–281 (SYDSPLSGTASTG), and 291–307 (RNSSVGSSANAGPTQQR). 4 positions are modified to phosphoserine: S126, S142, S272, and S275. The tract at residues 212–452 (IPPPHMLNKP…KSSSHHRTGK (241 aa)) is interaction with FUS3 and KSS1. S330 is modified (phosphoserine). Over residues 331-348 (ANTKARSASTSTSTSTST) the composition is skewed to low complexity. The interval 331 to 395 (ANTKARSAST…QRTSQPQQQS (65 aa)) is disordered. Over residues 349 to 361 (NRDRSSWHEAEPN) the composition is skewed to basic and acidic residues. A compositionally biased stretch (acidic residues) spans 362 to 372 (KDEEEGTDLAI). Residues 378-395 (PTPTFTTFQRTSQPQQQS) show a composition bias toward low complexity. A Phosphothreonine modification is found at T379. 2 positions are modified to phosphoserine: S395 and S428.

As to quaternary structure, forms a complex with DIG2, STE12 and either FUS3 or KSS1. The interaction of FUS3 with STE12 depends on the presence of both DIG1 and DIG2. STE12 is lost from FUS3/DIG1/DIG2 complex after pheromone treatment. DIG1 and DIG2 have also been reported to interact with CLN1 and CLN2. Post-translationally, phosphorylated by FUS3 and KSS1, in a pheromone-stimulated manner. Phosphorylation reduces the affinity for STE12.

The protein localises to the nucleus. DIG1 and DIG2 are negative regulators of the filamentation and pheromone induced mating program. DIG1 and DIG2 inhibit the transcriptional activity of STE12 by direct protein-protein interaction. DIG1 colocalizes to promoters with STE12 and redistributes with it during induction of filamentation (by butanol) or mating (by pheromone) to program specific genes, but binding of DIG1 to STE12 is reduced by pheromone treatment. This is Down-regulator of invasive growth 1 (DIG1) from Saccharomyces cerevisiae (strain ATCC 204508 / S288c) (Baker's yeast).